The sequence spans 546 residues: Chaperonin GroEL (546 aa).

Residues 29–32 (TLGP), lysine 50, 86–90 (DGTTT), glycine 414, 478–480 (NAA), and aspartate 494 each bind ATP.

Belongs to the chaperonin (HSP60) family. As to quaternary structure, forms a cylinder of 14 subunits composed of two heptameric rings stacked back-to-back. Interacts with the co-chaperonin GroES.

The protein localises to the cytoplasm. The catalysed reaction is ATP + H2O + a folded polypeptide = ADP + phosphate + an unfolded polypeptide.. Its function is as follows. Together with its co-chaperonin GroES, plays an essential role in assisting protein folding. The GroEL-GroES system forms a nano-cage that allows encapsulation of the non-native substrate proteins and provides a physical environment optimized to promote and accelerate protein folding. In Psychrobacter arcticus (strain DSM 17307 / VKM B-2377 / 273-4), this protein is Chaperonin GroEL.